A 392-amino-acid chain; its full sequence is MSGVPTPPPPGEMSSGPVAESWCYTQVKVVKFSYMWTINNFSFCREEMGEVLKSSTFSSGPNDKMKWCLRVNPKGLDDESKDYLSLYLLLVSCPKSEVRAKFKFSLLNAKREETKAMESQRAYRFVQGKDWGFKKFIRRDFLLDEANGLLPDDKLTLFCEVSVVQDSVNISGQSNMNMLKVPECQLSDDLGNLWECSRFTDCSLYVGGQEFKAHKSILAARSPVFNAMFEHEMEESKKNRVDISDVEPEVFKEMMGFIYTGKAPNLEKMADSLLAAADKYALERLKVMCEEALCNSLSVENVADTLILADLHSAEQLKAQAIDFINRCSVLRQLGCKDGKNWNSNHATDIMETAGWKSMIQSHPHLVAEAFRALASAQCPHFGLPRKRLKQS.

The region spanning 31 to 161 (KFSYMWTINN…DDKLTLFCEV (131 aa)) is the MATH domain. Residues 200–267 (TDCSLYVGGQ…IYTGKAPNLE (68 aa)) form the BTB domain.

Belongs to the Tdpoz family. As to quaternary structure, homodimer. Heterodimer with SPOP. Component of cullin-RING-based BCR (BTB-CUL3-RBX1) E3 ubiquitin-protein ligase complexes containing homodimeric SPOPL or the heterodimer formed by SPOP and SPOPL.

It localises to the nucleus. Its pathway is protein modification; protein ubiquitination. Its function is as follows. Component of a cullin-RING-based BCR (BTB-CUL3-RBX1) E3 ubiquitin-protein ligase complex that mediates the ubiquitination and subsequent proteasomal degradation of target proteins, but with relatively low efficiency. The protein is Speckle-type POZ protein-like A (spopla) of Danio rerio (Zebrafish).